We begin with the raw amino-acid sequence, 258 residues long: UPF0246 protein YaaA (258 aa).

This sequence belongs to the UPF0246 family.

This chain is UPF0246 protein YaaA, found in Escherichia coli O45:K1 (strain S88 / ExPEC).